Here is a 475-residue protein sequence, read N- to C-terminus: Bifunctional protein HldE (475 aa).

Residues 1-318 (MIQYSSKFNN…ENAIHHREET (318 aa)) form a ribokinase region. 195 to 198 (NMSE) serves as a coordination point for ATP. Aspartate 264 is an active-site residue. Residues 344–475 (MTNGCFDILH…NVIKKIQASK (132 aa)) are cytidylyltransferase.

The protein in the N-terminal section; belongs to the carbohydrate kinase PfkB family. It in the C-terminal section; belongs to the cytidylyltransferase family. As to quaternary structure, homodimer.

It catalyses the reaction D-glycero-beta-D-manno-heptose 7-phosphate + ATP = D-glycero-beta-D-manno-heptose 1,7-bisphosphate + ADP + H(+). The catalysed reaction is D-glycero-beta-D-manno-heptose 1-phosphate + ATP + H(+) = ADP-D-glycero-beta-D-manno-heptose + diphosphate. The protein operates within nucleotide-sugar biosynthesis; ADP-L-glycero-beta-D-manno-heptose biosynthesis; ADP-L-glycero-beta-D-manno-heptose from D-glycero-beta-D-manno-heptose 7-phosphate: step 1/4. Its pathway is nucleotide-sugar biosynthesis; ADP-L-glycero-beta-D-manno-heptose biosynthesis; ADP-L-glycero-beta-D-manno-heptose from D-glycero-beta-D-manno-heptose 7-phosphate: step 3/4. It functions in the pathway bacterial outer membrane biogenesis; LPS core biosynthesis. Functionally, catalyzes the phosphorylation of D-glycero-D-manno-heptose 7-phosphate at the C-1 position to selectively form D-glycero-beta-D-manno-heptose-1,7-bisphosphate. In terms of biological role, catalyzes the ADP transfer from ATP to D-glycero-beta-D-manno-heptose 1-phosphate, yielding ADP-D-glycero-beta-D-manno-heptose. This is Bifunctional protein HldE (hldE) from Actinobacillus pleuropneumoniae (Haemophilus pleuropneumoniae).